Reading from the N-terminus, the 365-residue chain is MSIIEKKIVLLPGDHVGVEVVEEAVKILKSISEVKPEIQFKFENHLIGGAAIDATGVPLPDEALEAAKKSDAVLLGAVGGPKWGTGEVRPEQGLLKIRKELNLYANLRPCNFASDKLLDLSPLKSDIVKGTDFTVVRELVGGIYFGDRVEDDGSGFASDSESYSVPEVERITRMAAFLSLQNDPPLPIWSLDKANVLASSRLWRKTVDRVIKEEFPKLTVQHQLIDSAAMILVKSPTKLNGIVITNNMFGDIISDEASVIPGSLGLLPSASLASLPDTNQAFGLYEPCHGSAPDLPKNKVNPIATILSAAMMLKLSLNLVKEGNAVEEAVRKVLDQGIMTGDLGGNNSTTEVGDAIAKEVKLLLA.

80 to 91 is an NAD(+) binding site; the sequence is GPKWGTGEVRPE. Substrate-binding residues include R98, R108, R137, and D226. Residues D226, D251, and D255 each coordinate Mg(2+). Position 290–301 (290–301) interacts with NAD(+); the sequence is GSAPDLPKNKVN.

It belongs to the isocitrate and isopropylmalate dehydrogenases family. In terms of assembly, homodimer. Mg(2+) serves as cofactor. The cofactor is Mn(2+).

Its subcellular location is the cytoplasm. The enzyme catalyses (2R,3S)-3-isopropylmalate + NAD(+) = 4-methyl-2-oxopentanoate + CO2 + NADH. The protein operates within amino-acid biosynthesis; L-leucine biosynthesis; L-leucine from 3-methyl-2-oxobutanoate: step 3/4. Catalyzes the oxidation of 3-carboxy-2-hydroxy-4-methylpentanoate (3-isopropylmalate) to 3-carboxy-4-methyl-2-oxopentanoate. The product decarboxylates to 4-methyl-2 oxopentanoate. This is 3-isopropylmalate dehydrogenase (LEU2) from Candida boidinii (Yeast).